Here is a 382-residue protein sequence, read N- to C-terminus: uncharacterized protein (382 aa).

The helical transmembrane segment at 1–21 threads the bilayer; it reads MKIILVVFVLIFVGVIGFNMI.

The protein belongs to the membrane fusion protein (MFP) (TC 8.A.1) family.

It is found in the membrane. This is an uncharacterized protein from Haemophilus influenzae (strain ATCC 51907 / DSM 11121 / KW20 / Rd).